Consider the following 56-residue polypeptide: UPF0434 protein CbuG_1535 (56 aa).

This sequence belongs to the UPF0434 family.

The chain is UPF0434 protein CbuG_1535 from Coxiella burnetii (strain CbuG_Q212) (Coxiella burnetii (strain Q212)).